A 105-amino-acid chain; its full sequence is Mini zinc finger protein 1 (105 aa).

A disordered region spans residues 1-29; that stretch reads MGPQQDRSAAKPYANGSTAAAAAAGRKEN. The ZF-HD dimerization-type; degenerate zinc finger occupies 35-84; it reads YRECQRNHAASIGGHAVDGCREFMASGAEGTAAALLCAACGCHRSFHRRE.

Homo- and heterodimers.

Its subcellular location is the cytoplasm. Functionally, inhibits zinc finger homeodomain (ZHD) transcription factors, by interacting with them to prevent both their nuclear localization and their DNA-binding properties. This Oryza sativa subsp. indica (Rice) protein is Mini zinc finger protein 1 (MIF1).